Consider the following 586-residue polypeptide: Phosphomethylpyrimidine synthase (586 aa).

The tract at residues 1-58 is disordered; that stretch reads MKQSVSAEQIELKSSLPGSKKVYVDGTREGMKVPMREIEQSDTNGVQNPPIRVYDTSG. Residues 22 to 39 are compositionally biased toward basic and acidic residues; that stretch reads VYVDGTREGMKVPMREIE. Substrate-binding positions include Asn193, Met222, Tyr251, His287, 307 to 309, 348 to 351, and Glu387; these read SRG and DGLR. Zn(2+) is bound at residue His391. Tyr414 serves as a coordination point for substrate. His455 contacts Zn(2+). [4Fe-4S] cluster is bound by residues Cys535, Cys538, and Cys543.

This sequence belongs to the ThiC family. [4Fe-4S] cluster is required as a cofactor.

The catalysed reaction is 5-amino-1-(5-phospho-beta-D-ribosyl)imidazole + S-adenosyl-L-methionine = 4-amino-2-methyl-5-(phosphooxymethyl)pyrimidine + CO + 5'-deoxyadenosine + formate + L-methionine + 3 H(+). It functions in the pathway cofactor biosynthesis; thiamine diphosphate biosynthesis. In terms of biological role, catalyzes the synthesis of the hydroxymethylpyrimidine phosphate (HMP-P) moiety of thiamine from aminoimidazole ribotide (AIR) in a radical S-adenosyl-L-methionine (SAM)-dependent reaction. This is Phosphomethylpyrimidine synthase from Bacillus mycoides (strain KBAB4) (Bacillus weihenstephanensis).